The primary structure comprises 166 residues: MNVITGRVWKFGDNIDTDLIIPARYLNTSDPHELAKHVMEDADPEFPSKVRPGDIIVAGYNFGSGSSREHAPIALKAAGVAAVIAKSFARIFYRNSFNMGLPIFELLESDEINEGDLIKIDLDNGIIHNVDTGKDYKFTPIPEFMQELIAAGGLINFAKEMLKENK.

The protein belongs to the LeuD family. LeuD type 2 subfamily. As to quaternary structure, heterodimer of LeuC and LeuD.

It catalyses the reaction (2R,3S)-3-isopropylmalate = (2S)-2-isopropylmalate. It participates in amino-acid biosynthesis; L-leucine biosynthesis; L-leucine from 3-methyl-2-oxobutanoate: step 2/4. Catalyzes the isomerization between 2-isopropylmalate and 3-isopropylmalate, via the formation of 2-isopropylmaleate. This chain is 3-isopropylmalate dehydratase small subunit, found in Nautilia profundicola (strain ATCC BAA-1463 / DSM 18972 / AmH).